Consider the following 186-residue polypeptide: Signal peptidase complex catalytic subunit SEC11 (186 aa).

Residues 1–20 (MDALGLSKLRHLKPRQLLSQ) are Cytoplasmic-facing. The chain crosses the membrane as a helical; Signal-anchor for type II membrane protein span at residues 21 to 41 (VLNFALILSTAFMLWKGLSVA). Topologically, residues 42-186 (TDSPSPIVVV…MGLLVIVQRE (145 aa)) are lumenal. Catalysis depends on charge relay system residues S55, H102, and D128. Residues 172–183 (ALLGIMGLLVIV) are C-terminal short (CTS) helix.

It belongs to the peptidase S26B family. As to quaternary structure, component of the signal peptidase complex (SPC) composed of a catalytic subunit SEC11 and three accessory subunits SPC1, SPC2 and SPC3. The complex induces a local thinning of the ER membrane which is used to measure the length of the signal peptide (SP) h-region of protein substrates. This ensures the selectivity of the complex towards h-regions shorter than 18-20 amino acids. SPC associates with the translocon complex.

The protein localises to the endoplasmic reticulum membrane. The enzyme catalyses Cleavage of hydrophobic, N-terminal signal or leader sequences from secreted and periplasmic proteins.. Functionally, catalytic component of the signal peptidase complex (SPC) which catalyzes the cleavage of N-terminal signal sequences from nascent proteins as they are translocated into the lumen of the endoplasmic reticulum. Specifically cleaves N-terminal signal peptides that contain a hydrophobic alpha-helix (h-region) shorter than 18-20 amino acids. This is Signal peptidase complex catalytic subunit SEC11 (SEC11) from Tuber melanosporum (strain Mel28) (Perigord black truffle).